Here is a 259-residue protein sequence, read N- to C-terminus: Leucine-rich repeat-containing protein 61 (259 aa).

LRR repeat units follow at residues 54–75 (NLEW…ASLR), 76–97 (QLAV…AACE), and 98–119 (NLQS…QCLA). Residues 138 to 178 (NPLCANASYWAVVRELLPGLKVIDGERVSGRGSELYQLCRD) form the LRRCT domain.

This is Leucine-rich repeat-containing protein 61 (Lrrc61) from Mus musculus (Mouse).